A 268-amino-acid polypeptide reads, in one-letter code: MNTTHVPEPHRTEQHTENLQHWRKILGIAPIVSIAFPAIMYFIFTKDSFEDSLFLRFITILLSFSYSAVQYAVLLHTNWKSHNKPEGILHTTLYYTLNLLLLAFSIISILSITTLPINKWKNDGGPILFSIFLPPLFMSPAYLLSTSCRLVPGQIGFTDTGINVLIDILTLLCSVGSLLLILEESEYCYCFAIISSILILIRLLGEKLSPEKQSPPPTAPWRIAVFVLILIFAALIYAFMMWVSIDILSDHFDLLTKARSTSVSKPGQ.

It belongs to the UPF0328 family.

The protein is UPF0328 protein ECU03_0040 of Encephalitozoon cuniculi (strain GB-M1) (Microsporidian parasite).